The primary structure comprises 248 residues: uncharacterized protein (248 aa).

Residues 7 to 25 (TIFIGGIYGLGVYIGAVAW) form a helical membrane-spanning segment.

Belongs to the methyltransferase superfamily. METL family.

Its subcellular location is the mitochondrion inner membrane. Functionally, probable methyltransferase. This is an uncharacterized protein from Schizosaccharomyces pombe (strain 972 / ATCC 24843) (Fission yeast).